Reading from the N-terminus, the 691-residue chain is TBC1 domain family member 15 (691 aa).

Alanine 2 is subject to N-acetylalanine. Phosphoserine is present on residues serine 23, serine 70, serine 205, proline 213, and serine 274. One can recognise a Rab-GAP TBC domain in the interval 346-556; the sequence is GLSHALRKQA…RLWEVMWTEL (211 aa). Phosphoserine occurs at positions 640 and 675. Phosphothreonine is present on threonine 689.

As to quaternary structure, interacts with non-phosphorylated form of RAB8A; phosphorylation of RAB8A at 'Thr-72' disrupts this interaction. Interacts with ARMC12. Ubiquitous.

It is found in the cytoplasm. Functionally, acts as a GTPase activating protein for RAB7A. Does not act on RAB4, RAB5 or RAB6. This Homo sapiens (Human) protein is TBC1 domain family member 15 (TBC1D15).